Here is a 50-residue protein sequence, read N- to C-terminus: Insulin (50 aa).

Cystine bridges form between Cys-7–Cys-36, Cys-19–Cys-49, and Cys-35–Cys-40.

It belongs to the insulin family. Heterodimer of a B chain and an A chain linked by two disulfide bonds.

Its subcellular location is the secreted. In terms of biological role, insulin decreases blood glucose concentration. It increases cell permeability to monosaccharides, amino acids and fatty acids. It accelerates glycolysis, the pentose phosphate cycle, and glycogen synthesis in liver. The sequence is that of Insulin (ins) from Oncorhynchus gorbuscha (Pink salmon).